The following is a 190-amino-acid chain: 3-isopropylmalate dehydratase small subunit (190 aa).

It belongs to the LeuD family. LeuD type 1 subfamily. In terms of assembly, heterodimer of LeuC and LeuD.

It carries out the reaction (2R,3S)-3-isopropylmalate = (2S)-2-isopropylmalate. Its pathway is amino-acid biosynthesis; L-leucine biosynthesis; L-leucine from 3-methyl-2-oxobutanoate: step 2/4. In terms of biological role, catalyzes the isomerization between 2-isopropylmalate and 3-isopropylmalate, via the formation of 2-isopropylmaleate. This is 3-isopropylmalate dehydratase small subunit from Staphylococcus aureus (strain MSSA476).